The chain runs to 879 residues: Phosphoinositide 3-kinase regulatory subunit 5 (879 aa).

The interval 23-100 (SGSTDISSNW…APYIPETSDL (78 aa)) is heterodimerization. 2 disordered regions span residues 314-345 (SLED…PKQD) and 570-590 (SSST…PSPS). Residues 315 to 336 (LEDDVTEEDEEVDFEEVDDKDE) show a composition bias toward acidic residues. Residues 570-589 (SSSTNAPMTNAESPLKSPSP) show a composition bias toward polar residues. The interaction with beta-gamma G protein dimers stretch occupies residues 651-751 (PILADMVLYY…WSNGEKVCTS (101 aa)).

As to quaternary structure, heterodimer. Interacts with a catalytic subunit and with beta-gamma G protein dimers.

It is found in the nucleus. It localises to the cytoplasm. The protein localises to the cell membrane. With respect to regulation, greatly activated by G gamma proteins. In terms of biological role, regulatory subunit of the PI3K gamma complex. Required for recruitment of the catalytic subunit to the plasma membrane via interaction with beta-gamma G protein dimers. Required for G protein-mediated activation of PIK3CG. This Xenopus laevis (African clawed frog) protein is Phosphoinositide 3-kinase regulatory subunit 5 (pik3r5).